The chain runs to 289 residues: ATP synthase subunit a (289 aa).

6 helical membrane-spanning segments follow: residues 43 to 63 (AFHV…VLLF), 103 to 123 (VIAP…AVDL), 160 to 180 (FSVF…GGFI), 193 to 213 (IFVQ…TLIA), 232 to 252 (VFIL…GLGV), and 259 to 279 (AVFH…LTIV).

It belongs to the ATPase A chain family. As to quaternary structure, F-type ATPases have 2 components, CF(1) - the catalytic core - and CF(0) - the membrane proton channel. CF(1) has five subunits: alpha(3), beta(3), gamma(1), delta(1), epsilon(1). CF(0) has three main subunits: a(1), b(2) and c(9-12). The alpha and beta chains form an alternating ring which encloses part of the gamma chain. CF(1) is attached to CF(0) by a central stalk formed by the gamma and epsilon chains, while a peripheral stalk is formed by the delta and b chains.

Its subcellular location is the cell inner membrane. Its function is as follows. Key component of the proton channel; it plays a direct role in the translocation of protons across the membrane. The polypeptide is ATP synthase subunit a (Pseudomonas fluorescens (strain Pf0-1)).